The chain runs to 366 residues: NADH-quinone oxidoreductase subunit D (366 aa).

It belongs to the complex I 49 kDa subunit family. As to quaternary structure, NDH-1 is composed of 14 different subunits. Subunits NuoB, C, D, E, F, and G constitute the peripheral sector of the complex.

Its subcellular location is the cell membrane. It catalyses the reaction a quinone + NADH + 5 H(+)(in) = a quinol + NAD(+) + 4 H(+)(out). NDH-1 shuttles electrons from NADH, via FMN and iron-sulfur (Fe-S) centers, to quinones in the respiratory chain. The immediate electron acceptor for the enzyme in this species is believed to be a menaquinone. Couples the redox reaction to proton translocation (for every two electrons transferred, four hydrogen ions are translocated across the cytoplasmic membrane), and thus conserves the redox energy in a proton gradient. In Desulforamulus reducens (strain ATCC BAA-1160 / DSM 100696 / MI-1) (Desulfotomaculum reducens), this protein is NADH-quinone oxidoreductase subunit D.